We begin with the raw amino-acid sequence, 347 residues long: 3-isopropylmalate dehydrogenase (347 aa).

Residues Arg94, Arg104, Arg128, and Asp219 each contribute to the substrate site. 3 residues coordinate Mg(2+): Asp219, Asp243, and Asp247. An NAD(+)-binding site is contributed by 279–291; sequence GSAPDIAGQGKAD.

This sequence belongs to the isocitrate and isopropylmalate dehydrogenases family. LeuB type 2 subfamily. As to quaternary structure, homodimer. The cofactor is Mg(2+). Requires Mn(2+) as cofactor.

It localises to the cytoplasm. The enzyme catalyses (2R,3S)-3-isopropylmalate + NAD(+) = 4-methyl-2-oxopentanoate + CO2 + NADH. Its pathway is amino-acid biosynthesis; L-leucine biosynthesis; L-leucine from 3-methyl-2-oxobutanoate: step 3/4. Functionally, catalyzes the oxidation of 3-carboxy-2-hydroxy-4-methylpentanoate (3-isopropylmalate) to 3-carboxy-4-methyl-2-oxopentanoate. The product decarboxylates to 4-methyl-2 oxopentanoate. The sequence is that of 3-isopropylmalate dehydrogenase from Streptomyces avermitilis (strain ATCC 31267 / DSM 46492 / JCM 5070 / NBRC 14893 / NCIMB 12804 / NRRL 8165 / MA-4680).